A 732-amino-acid polypeptide reads, in one-letter code: mRNA-binding protein puf3 (732 aa).

The segment at 98-123 (PDSLVSTPTAPSANHHGNPFPNGKQS) is disordered. Over residues 100–109 (SLVSTPTAPS) the composition is skewed to polar residues. A PUM-HD domain is found at 376–716 (QQSRVLYLFH…HLIMSVERFR (341 aa)). 8 Pumilio repeats span residues 396 to 431 (DILG…AVFQ), 432 to 468 (EIAS…ILLS), 469 to 504 (QIKG…QLIQ), 505 to 540 (ELDG…FILR), 541 to 576 (ALRP…IIEE), 577 to 611 (LLPH…YIFD), 612 to 647 (LMID…RILN), and 655 to 690 (ENCS…LLIS).

It belongs to the PUF3 family.

The protein localises to the mitochondrion outer membrane. It localises to the cytoplasm. Functionally, RNA-binding protein involved in post-transcriptional regulation. Predominantly binds to mRNAs encoding mitochondrial proteins and localizes them to the vicinity of mitochondria for translation. Regulates mitochondrial biogenesis, motility and morphology. This chain is mRNA-binding protein puf3 (puf3), found in Schizosaccharomyces pombe (strain 972 / ATCC 24843) (Fission yeast).